A 344-amino-acid polypeptide reads, in one-letter code: Heat-inducible transcription repressor HrcA (344 aa).

The protein belongs to the HrcA family.

Negative regulator of class I heat shock genes (grpE-dnaK-dnaJ and groELS operons). Prevents heat-shock induction of these operons. This is Heat-inducible transcription repressor HrcA from Streptococcus equi subsp. zooepidemicus (strain MGCS10565).